Consider the following 424-residue polypeptide: Zinc finger and BTB domain-containing protein 6 (424 aa).

Residues 33-97 (CDVSIYINDT…CYTGALEVKR (65 aa)) form the BTB domain. Serine 202 is subject to Phosphoserine. 4 consecutive C2H2-type zinc fingers follow at residues 301–323 (HQCP…LKMH), 326–348 (FLCL…IRGH), 354–376 (FQCT…LNIH), and 382–405 (YKCH…TSVH). Residues 402 to 424 (TSVHGRSSGEKLSRPDLKRQSLL) form a disordered region. Residues 408–424 (SSGEKLSRPDLKRQSLL) show a composition bias toward basic and acidic residues.

In terms of tissue distribution, widely expressed with highest levels in brain.

It localises to the nucleus. Functionally, may be involved in transcriptional regulation. In Homo sapiens (Human), this protein is Zinc finger and BTB domain-containing protein 6 (ZBTB6).